We begin with the raw amino-acid sequence, 3225 residues long: Intermembrane lipid transfer protein VPS13 (3225 aa).

Positions 1–1390 (MLEGLVAGLL…VFAADVEQHT (1390 aa)) are involved in phospholipid binding. The 114-residue stretch at 2–115 (LEGLVAGLLN…RHRLKMEKLD (114 aa)) folds into the Chorein N-terminal domain. Disordered regions lie at residues 1568–1610 (PEAP…QQLV) and 1768–1799 (AGLK…SHSG). Low complexity predominate over residues 1590–1610 (VRVGSSGRHSESSAGSGQQLV). Polar residues predominate over residues 1777-1799 (GKGTSTLATRTRHASQSAASHSG). The 281-residue stretch at 2290-2570 (FKVTVYSPYV…PYAWDFPAAK (281 aa)) folds into the SHR-BD domain.

The protein belongs to the VPS13 family.

The protein resides in the membrane. Functionally, mediates the transfer of lipids between membranes at organelle contact sites. Binds phospholipids, including phosphatidylcholine (PC), phosphatidylethanolamine (PE), phosphatidic acid (PA), and phosphatidylserine (PS). May play a role in mitochondrial lipid homeostasis, Golgi vesicle transport, reticulophagy, actin cytoskeleton organization and formation of the prospore membrane. The protein is Intermembrane lipid transfer protein VPS13 of Chaetomium thermophilum (strain DSM 1495 / CBS 144.50 / IMI 039719) (Thermochaetoides thermophila).